Consider the following 387-residue polypeptide: S-adenosylmethionine synthase (387 aa).

ATP is bound at residue His15. Asp17 is a Mg(2+) binding site. Glu43 is a binding site for K(+). Residues Glu56 and Gln99 each coordinate L-methionine. Residues 99–109 form a flexible loop region; it reads QSPDIALGVNR. ATP-binding positions include 166 to 168, 232 to 233, Asp241, 247 to 248, Ala264, and Lys268; these read DAK, RF, and RK. Asp241 lines the L-methionine pocket. Lys272 contacts L-methionine.

It belongs to the AdoMet synthase family. Homotetramer; dimer of dimers. Requires Mg(2+) as cofactor. It depends on K(+) as a cofactor.

The protein localises to the cytoplasm. The catalysed reaction is L-methionine + ATP + H2O = S-adenosyl-L-methionine + phosphate + diphosphate. It participates in amino-acid biosynthesis; S-adenosyl-L-methionine biosynthesis; S-adenosyl-L-methionine from L-methionine: step 1/1. In terms of biological role, catalyzes the formation of S-adenosylmethionine (AdoMet) from methionine and ATP. The overall synthetic reaction is composed of two sequential steps, AdoMet formation and the subsequent tripolyphosphate hydrolysis which occurs prior to release of AdoMet from the enzyme. The chain is S-adenosylmethionine synthase from Nitrosomonas eutropha (strain DSM 101675 / C91 / Nm57).